The primary structure comprises 327 residues: Vacuolar protein sorting-associated protein 26A (327 aa).

The disordered stretch occupies residues 306-327 (RTNFHQRFESPESQASAEQPEM). Residue Ser-315 is modified to Phosphoserine. The span at 316 to 327 (PESQASAEQPEM) shows a compositional bias: polar residues.

The protein belongs to the VPS26 family. In terms of assembly, component of the heterotrimeric retromer cargo-selective complex (CSC), also described as vacuolar protein sorting subcomplex (VPS), formed by VPS26 (VPS26A or VPS26B), VPS29 and VPS35. The CSC has a highly elongated structure with VPS26 and VPS29 binding independently at opposite distal ends of VPS35 as central platform. The CSC is believed to associate with variable sorting nexins to form functionally distinct retromer complex variants. The originally described retromer complex (also called SNX-BAR retromer) is a pentamer containing the CSC and a heterodimeric membrane-deforming subcomplex formed between SNX1 or SNX2 and SNX5 or SNX6 (also called SNX-BAR subcomplex); the respective CSC and SNX-BAR subcomplexes associate with low affinity. The CSC associates with SNX3 to form a SNX3-retromer complex. The CSC associates with SNX27, the WASH complex and the SNX-BAR subcomplex to form the SNX27-retromer complex. Interacts with VPS29, VPS35, SNX1, SNX2, SNX5, SNX6, SNX3, SNX27, RAB7A, ECPAS, EHD1, WASHC5, SORL1.

Its subcellular location is the cytoplasm. The protein localises to the endosome membrane. The protein resides in the early endosome. Acts as a component of the retromer cargo-selective complex (CSC). The CSC is believed to be the core functional component of retromer or respective retromer complex variants acting to prevent missorting of selected transmembrane cargo proteins into the lysosomal degradation pathway. The recruitment of the CSC to the endosomal membrane involves RAB7A and SNX3. The SNX-BAR retromer mediates retrograde transport of cargo proteins from endosomes to the trans-Golgi network (TGN) and is involved in endosome-to-plasma membrane transport for cargo protein recycling. The SNX3-retromer mediates the retrograde endosome-to-TGN transport of WLS distinct from the SNX-BAR retromer pathway. The SNX27-retromer is believed to be involved in endosome-to-plasma membrane trafficking and recycling of a broad spectrum of cargo proteins. The CSC seems to act as recruitment hub for other proteins, such as the WASH complex and TBC1D5. Required for retrograde transport of lysosomal enzyme receptor IGF2R. Required to regulate transcytosis of the polymeric immunoglobulin receptor (pIgR-pIgA). Required for the endosomal localization of WASHC2A (indicative for the WASH complex). Required for the endosomal localization of TBC1D5. Mediates retromer cargo recognition of SORL1 and is involved in trafficking of SORL1 implicated in sorting and processing of APP. Involved in retromer-independent lysosomal sorting of F2R. Involved in recycling of ADRB2. Enhances the affinity of SNX27 for PDZ-binding motifs in cargo proteins. The polypeptide is Vacuolar protein sorting-associated protein 26A (Homo sapiens (Human)).